Consider the following 69-residue polypeptide: U2-agatoxin-Ao1o (69 aa).

Residues 1 to 20 form the signal peptide; it reads MKAIISLLLISAMVFSMFEA. Residues 21-34 constitute a propeptide that is removed on maturation; it reads VPVRRRFTAFEGER. Disulfide bonds link C36-C52, C43-C57, and C51-C67. Leucine amide is present on L68.

This sequence belongs to the neurotoxin 01 (U2-agtx) family. Expressed by the venom gland.

It is found in the secreted. Insect active toxin causing rapid but reversible paralysis in crickets. No activity shown in mammals. Does not show effect on mammalian voltage-gated calcium channels. This chain is U2-agatoxin-Ao1o, found in Agelena orientalis (Funnel-web spider).